A 556-amino-acid polypeptide reads, in one-letter code: Dihydroxy-acid dehydratase (556 aa).

Cys-47 is a [2Fe-2S] cluster binding site. Asp-79 is a Mg(2+) binding site. A [2Fe-2S] cluster-binding site is contributed by Cys-120. Mg(2+)-binding residues include Asp-121 and Lys-122. Lys-122 carries the N6-carboxylysine modification. Cys-192 is a [2Fe-2S] cluster binding site. Glu-444 lines the Mg(2+) pocket. Ser-470 (proton acceptor) is an active-site residue.

This sequence belongs to the IlvD/Edd family. Homodimer. It depends on [2Fe-2S] cluster as a cofactor. The cofactor is Mg(2+).

The enzyme catalyses (2R)-2,3-dihydroxy-3-methylbutanoate = 3-methyl-2-oxobutanoate + H2O. It catalyses the reaction (2R,3R)-2,3-dihydroxy-3-methylpentanoate = (S)-3-methyl-2-oxopentanoate + H2O. Its pathway is amino-acid biosynthesis; L-isoleucine biosynthesis; L-isoleucine from 2-oxobutanoate: step 3/4. The protein operates within amino-acid biosynthesis; L-valine biosynthesis; L-valine from pyruvate: step 3/4. Its function is as follows. Functions in the biosynthesis of branched-chain amino acids. Catalyzes the dehydration of (2R,3R)-2,3-dihydroxy-3-methylpentanoate (2,3-dihydroxy-3-methylvalerate) into 2-oxo-3-methylpentanoate (2-oxo-3-methylvalerate) and of (2R)-2,3-dihydroxy-3-methylbutanoate (2,3-dihydroxyisovalerate) into 2-oxo-3-methylbutanoate (2-oxoisovalerate), the penultimate precursor to L-isoleucine and L-valine, respectively. This chain is Dihydroxy-acid dehydratase, found in Prochlorococcus marinus (strain MIT 9303).